A 288-amino-acid polypeptide reads, in one-letter code: Bifunctional protein FolD (288 aa).

NADP(+)-binding positions include 164-166 and valine 230; that span reads GRS.

It belongs to the tetrahydrofolate dehydrogenase/cyclohydrolase family. In terms of assembly, homodimer.

The catalysed reaction is (6R)-5,10-methylene-5,6,7,8-tetrahydrofolate + NADP(+) = (6R)-5,10-methenyltetrahydrofolate + NADPH. It carries out the reaction (6R)-5,10-methenyltetrahydrofolate + H2O = (6R)-10-formyltetrahydrofolate + H(+). The protein operates within one-carbon metabolism; tetrahydrofolate interconversion. In terms of biological role, catalyzes the oxidation of 5,10-methylenetetrahydrofolate to 5,10-methenyltetrahydrofolate and then the hydrolysis of 5,10-methenyltetrahydrofolate to 10-formyltetrahydrofolate. The protein is Bifunctional protein FolD of Thermomicrobium roseum (strain ATCC 27502 / DSM 5159 / P-2).